Consider the following 200-residue polypeptide: Recombination protein RecR (200 aa).

The C4-type zinc-finger motif lies at 59 to 74; that stretch reads CSTCGSLDTQDPCAIC. In terms of domain architecture, Toprim spans 82-177; the sequence is SLICVVEEVG…TVSMLARGVP (96 aa).

This sequence belongs to the RecR family.

Its function is as follows. May play a role in DNA repair. It seems to be involved in an RecBC-independent recombinational process of DNA repair. It may act with RecF and RecO. The sequence is that of Recombination protein RecR from Phenylobacterium zucineum (strain HLK1).